Reading from the N-terminus, the 116-residue chain is Ribosome-binding factor A (116 aa).

Belongs to the RbfA family. Monomer. Binds 30S ribosomal subunits, but not 50S ribosomal subunits or 70S ribosomes.

Its subcellular location is the cytoplasm. In terms of biological role, one of several proteins that assist in the late maturation steps of the functional core of the 30S ribosomal subunit. Associates with free 30S ribosomal subunits (but not with 30S subunits that are part of 70S ribosomes or polysomes). Required for efficient processing of 16S rRNA. May interact with the 5'-terminal helix region of 16S rRNA. In Pediococcus pentosaceus (strain ATCC 25745 / CCUG 21536 / LMG 10740 / 183-1w), this protein is Ribosome-binding factor A.